A 660-amino-acid chain; its full sequence is Bifunctional polymyxin resistance protein ArnA (660 aa).

Residues 1–304 (MKAVIFAYHD…TLGLVAGARL (304 aa)) form a formyltransferase ArnAFT region. The Proton donor; for formyltransferase activity role is filled by H104. (6R)-10-formyltetrahydrofolate is bound by residues R114 and 136–140 (VKRAD). The tract at residues 314 to 660 (RRIRVLILGV…RSVDVAERAS (347 aa)) is dehydrogenase ArnADH. Residues D347 and 368–369 (DI) each bind NAD(+). UDP-alpha-D-glucuronate-binding positions include A393, Y398, and 432-433 (TS). Residue E434 is the Proton acceptor; for decarboxylase activity of the active site. Residues R460, N492, 526–535 (KLIDGGQQKR), and Y613 each bind UDP-alpha-D-glucuronate. The active-site Proton donor; for decarboxylase activity is the R619.

This sequence in the N-terminal section; belongs to the Fmt family. UDP-L-Ara4N formyltransferase subfamily. The protein in the C-terminal section; belongs to the NAD(P)-dependent epimerase/dehydratase family. UDP-glucuronic acid decarboxylase subfamily. As to quaternary structure, homohexamer, formed by a dimer of trimers.

It carries out the reaction UDP-alpha-D-glucuronate + NAD(+) = UDP-beta-L-threo-pentopyranos-4-ulose + CO2 + NADH. The catalysed reaction is UDP-4-amino-4-deoxy-beta-L-arabinose + (6R)-10-formyltetrahydrofolate = UDP-4-deoxy-4-formamido-beta-L-arabinose + (6S)-5,6,7,8-tetrahydrofolate + H(+). Its pathway is nucleotide-sugar biosynthesis; UDP-4-deoxy-4-formamido-beta-L-arabinose biosynthesis; UDP-4-deoxy-4-formamido-beta-L-arabinose from UDP-alpha-D-glucuronate: step 1/3. It participates in nucleotide-sugar biosynthesis; UDP-4-deoxy-4-formamido-beta-L-arabinose biosynthesis; UDP-4-deoxy-4-formamido-beta-L-arabinose from UDP-alpha-D-glucuronate: step 3/3. It functions in the pathway bacterial outer membrane biogenesis; lipopolysaccharide biosynthesis. Bifunctional enzyme that catalyzes the oxidative decarboxylation of UDP-glucuronic acid (UDP-GlcUA) to UDP-4-keto-arabinose (UDP-Ara4O) and the addition of a formyl group to UDP-4-amino-4-deoxy-L-arabinose (UDP-L-Ara4N) to form UDP-L-4-formamido-arabinose (UDP-L-Ara4FN). The modified arabinose is attached to lipid A and is required for resistance to polymyxin and cationic antimicrobial peptides. In Salmonella paratyphi B (strain ATCC BAA-1250 / SPB7), this protein is Bifunctional polymyxin resistance protein ArnA.